An 839-amino-acid polypeptide reads, in one-letter code: Taste receptor type 1 member 2 (839 aa).

A signal peptide spans 1-19 (MGPRAKTICSLFFLLWVLA). The Extracellular portion of the chain corresponds to 20–566 (EPAENSDFYL…VFLEWHEAPT (547 aa)). Asn-84, Asn-248, Asn-292, Asn-312, Asn-368, Asn-407, Asn-428, Asn-487, and Asn-527 each carry an N-linked (GlcNAc...) asparagine glycan. Residues 567 to 587 (IAVALLAALGFLSTLAILVIF) form a helical membrane-spanning segment. Over 588–602 (WRHFQTPIVRSAGGP) the chain is Cytoplasmic. Residues 603-623 (MCFLMLTLLLVAYMVVPVYVG) form a helical membrane-spanning segment. The Extracellular portion of the chain corresponds to 624–635 (PPKVSTCLCRQA). Residues 636–656 (LFPLCFTICISCIAVRSFQIV) traverse the membrane as a helical segment. The Cytoplasmic portion of the chain corresponds to 657 to 681 (CAFKMASRFPRAYSYWVRYQGPYVS). The chain crosses the membrane as a helical span at residues 682-702 (MAFITVLKMVIVVIGMLATGL). At 703 to 727 (SPTTRTDPDDPKITIVSCNPNYRNS) the chain is on the extracellular side. A helical transmembrane segment spans residues 728–748 (LLFNTSLDLLLSVVGFSFAYM). Topologically, residues 749 to 760 (GKELPTNYNEAK) are cytoplasmic. A helical transmembrane segment spans residues 761-781 (FITLSMTFYFTSSVSLCTFMS). Residues 782 to 784 (AYS) are Extracellular-facing. Residues 785 to 805 (GVLVTIVDLLVTVLNLLAISL) form a helical membrane-spanning segment. The Cytoplasmic portion of the chain corresponds to 806–839 (GYFGPKCYMILFYPERNTSAYFNSMIQGYTMRRD).

The protein belongs to the G-protein coupled receptor 3 family. TAS1R subfamily. In terms of assembly, forms heterodimers with TAS1R3.

The protein localises to the cell membrane. In terms of biological role, putative taste receptor. TAS1R2/TAS1R3 recognizes diverse natural and synthetic sweeteners. This Pan troglodytes (Chimpanzee) protein is Taste receptor type 1 member 2 (TAS1R2).